We begin with the raw amino-acid sequence, 198 residues long: V-type proton ATPase subunit E (198 aa).

This sequence belongs to the V-ATPase E subunit family.

Functionally, produces ATP from ADP in the presence of a proton gradient across the membrane. The polypeptide is V-type proton ATPase subunit E (Borrelia turicatae (strain 91E135)).